The primary structure comprises 510 residues: ATP synthase subunit alpha, mitochondrial (510 aa).

171 to 178 (GDRQTGKT) contacts ATP.

In terms of assembly, F-type ATP synthases have 2 components, the catalytic core F(1) and the membrane-embedded component F(0), linked together by a central stalk and a peripheral stalk. The central stalk, also called rotor shaft, is often seen as part of F(1). The peripheral stalk is seen as part of F(0). F(0) contains the membrane channel next to the rotor. F-type ATP synthases form dimers but each monomer functions independently in ATP generation. The dimer consists of 18 different polypeptides: ATP1 (subunit alpha, part of F(1), 3 molecules per monomer), ATP2 (subunit beta, part of F(1), 3 molecules per monomer), ATP3 (subunit gamma, part of the central stalk), ATP4 (subunit b, part of the peripheral stalk), ATP5/OSCP (subunit 5/OSCP, part of the peripheral stalk), ATP6 (subunit a, part of the peripheral stalk), ATP7 (subunit d, part of the peripheral stalk), ATP8 (subunit 8, part of the peripheral stalk), OLI1 (subunit c, part of the rotor, 10 molecules per monomer), ATP14 (subunit h, part of the peripheral stalk), ATP15 (subunit epsilon, part of the central stalk), ATP16 (subunit delta, part of the central stalk), ATP17 (subunit f, part of the peripheral stalk), ATP18 (subunit i/j, part of the peripheral stalk). Dimer-specific subunits are ATP19 (subunit k, at interface between monomers), ATP20 (subunit g, at interface between monomers), TIM11 (subunit e, at interface between monomers). Also contains subunit L.

Its subcellular location is the mitochondrion inner membrane. Mitochondrial membrane ATP synthase (F(1)F(0) ATP synthase or Complex V) produces ATP from ADP in the presence of a proton gradient across the membrane which is generated by electron transport complexes of the respiratory chain. F-type ATP synthases consist of two structural domains, F(1) - containing the extramembraneous catalytic core, and F(0) - containing the membrane proton channel, linked together by a central stalk and a peripheral stalk. During catalysis, ATP synthesis in the catalytic domain of F(1) is coupled via a rotary mechanism of the central stalk subunits to proton translocation. Subunits alpha/ATP1 and beta/ATP2 form the catalytic core in F(1). Rotation of the central stalk against the surrounding alpha/ATP1(3)beta/ATP2(3) subunits leads to hydrolysis of ATP in three separate catalytic sites on the beta/ATP2 subunits. Subunit alpha/ATP1 does not bear the catalytic high-affinity ATP-binding sites. The sequence is that of ATP synthase subunit alpha, mitochondrial from Pichia angusta (Yeast).